Reading from the N-terminus, the 349-residue chain is Soluble TNF receptor II (349 aa).

Residues 1–19 (MKSVLYSYILFLSCIIING) form the signal peptide. 2 TNFR-Cys repeats span residues 31-65 (KCKD…NTQC) and 67-108 (PCGS…NRIC). Intrachain disulfides connect cysteine 32/cysteine 43, cysteine 44/cysteine 57, cysteine 47/cysteine 65, cysteine 68/cysteine 83, cysteine 86/cysteine 100, and cysteine 90/cysteine 108. N-linked (GlcNAc...) asparagine; by host glycans are attached at residues asparagine 101, asparagine 189, and asparagine 248.

Belongs to the orthopoxvirus OPG002 family.

In terms of biological role, inhibits host immune defense by binding to host TNF and various chemokines in the extracellular space. Binds host CC chemokines (beta chemokines) and CXC chemokines (alpha chemokines). This chain is Soluble TNF receptor II (OPG002), found in Camelus.